Reading from the N-terminus, the 305-residue chain is Large ribosomal subunit protein uL10 (305 aa).

Belongs to the universal ribosomal protein uL10 family. In terms of assembly, P0 forms a pentameric complex by interaction with dimers of P1 and P2. Phosphorylated.

In terms of biological role, ribosomal protein P0 is the functional equivalent of E.coli protein L10. The chain is Large ribosomal subunit protein uL10 (rplp0) from Dictyostelium discoideum (Social amoeba).